Here is a 205-residue protein sequence, read N- to C-terminus: dITP/XTP pyrophosphatase (205 aa).

Substrate is bound at residue 11–16 (TKNMGK). Mg(2+) is bound by residues glutamate 44 and aspartate 73. The active-site Proton acceptor is aspartate 73. Residues serine 74, 158-161 (FGYD), lysine 181, and 186-187 (HR) contribute to the substrate site.

The protein belongs to the HAM1 NTPase family. Homodimer. Mg(2+) is required as a cofactor.

The enzyme catalyses XTP + H2O = XMP + diphosphate + H(+). It carries out the reaction dITP + H2O = dIMP + diphosphate + H(+). It catalyses the reaction ITP + H2O = IMP + diphosphate + H(+). Functionally, pyrophosphatase that catalyzes the hydrolysis of nucleoside triphosphates to their monophosphate derivatives, with a high preference for the non-canonical purine nucleotides XTP (xanthosine triphosphate), dITP (deoxyinosine triphosphate) and ITP. Seems to function as a house-cleaning enzyme that removes non-canonical purine nucleotides from the nucleotide pool, thus preventing their incorporation into DNA/RNA and avoiding chromosomal lesions. This Bacillus cereus (strain ATCC 14579 / DSM 31 / CCUG 7414 / JCM 2152 / NBRC 15305 / NCIMB 9373 / NCTC 2599 / NRRL B-3711) protein is dITP/XTP pyrophosphatase.